The following is an 829-amino-acid chain: ATP-dependent RNA helicase drs1 (829 aa).

Disordered regions lie at residues 1–96 (MAPS…MDTE) and 145–295 (RRER…MSSF). Residues 20 to 32 (DNEEDIPLEEEQE) are compositionally biased toward acidic residues. The span at 48–59 (KQKKKNNKKSKK) shows a compositional bias: basic residues. Residues 63 to 78 (TEDDDDEAETKEDDAA) show a composition bias toward acidic residues. Over residues 150–163 (AAKEGKTTATKEEE) the composition is skewed to basic and acidic residues. Acidic residues-rich tracts occupy residues 164–190 (DKME…DGVL), 218–228 (DGEDEDSEGED), 235–246 (DEDEGDASDDDS), and 258–271 (QSSD…EEEE). The segment covering 272 to 291 (AKMKEFFAPEEENQPKKKGE) has biased composition (basic and acidic residues). The Q motif motif lies at 293-321 (SSFQEMSLSRPILRGLTSVGFTKPTPIQA). In terms of domain architecture, Helicase ATP-binding spans 324–498 (IPISLMGKDV…RAGLNKPVRI (175 aa)). ATP is bound at residue 337–344 (AVTGSGKT). The short motif at 446–449 (DEAD) is the DEAD box element. One can recognise a Helicase C-terminal domain in the interval 528-707 (YLLHICKTIY…EKQLQNMEMQ (180 aa)). The segment at 728-829 (TWFETQEDKK…KGGKGKGRRK (102 aa)) is disordered. Residues 749 to 791 (GVRDKLKSKNEGKLSNKDRKKLDTMQERKQERTYKKGSAERAG) show a composition bias toward basic and acidic residues. The span at 800 to 815 (KVVKKVGRSAGPKKKG) shows a compositional bias: basic residues.

It belongs to the DEAD box helicase family. DDX27/DRS1 subfamily. Associates with pre-ribosomal particles.

The protein resides in the nucleus. Its subcellular location is the nucleolus. The enzyme catalyses ATP + H2O = ADP + phosphate + H(+). Functionally, ATP-binding RNA helicase involved in ribosome assembly. The protein is ATP-dependent RNA helicase drs1 (drh-11) of Neurospora crassa (strain ATCC 24698 / 74-OR23-1A / CBS 708.71 / DSM 1257 / FGSC 987).